The primary structure comprises 239 residues: uncharacterized protein (239 aa).

A disordered region spans residues 129 to 155 (DSLDDEDDNMISSNDPTKSPEEHDTTT). Ser160 bears the Phosphoserine mark.

This is an uncharacterized protein from Schizosaccharomyces pombe (strain 972 / ATCC 24843) (Fission yeast).